Reading from the N-terminus, the 266-residue chain is UPF0354 protein Lm4b_01619 (266 aa).

Belongs to the UPF0354 family.

The chain is UPF0354 protein Lm4b_01619 from Listeria monocytogenes serotype 4b (strain CLIP80459).